A 433-amino-acid polypeptide reads, in one-letter code: Monodehydroascorbate reductase (433 aa).

FAD contacts are provided by residues 12–15, Glu-39, Arg-46, Lys-51, Ile-94, and 145–146; these read GGVS and RE. NAD(+)-binding positions include 170-176, Glu-194, Arg-200, and Gly-259; that span reads GGYIGLE. NADP(+) is bound at residue 172 to 176; that stretch reads YIGLE. 2 residues coordinate NADP(+): Arg-200 and Gly-259. Asp-296 provides a ligand contact to FAD. An NAD(+)-binding site is contributed by 312–313; it reads EH. An NADP(+)-binding site is contributed by 312–313; that stretch reads EH. Val-314 is a binding site for FAD. Arg-318 contacts L-ascorbate. Position 347 (Tyr-347) interacts with FAD. Residue Tyr-347 coordinates NAD(+). Position 347 (Tyr-347) interacts with NADP(+). L-ascorbate is bound at residue Arg-349.

The protein belongs to the FAD-dependent oxidoreductase family. The cofactor is FAD. As to expression, expressed at relatively low levels in all tissues examined.

It is found in the cytoplasm. It carries out the reaction 2 monodehydro-L-ascorbate radical + NADH + H(+) = 2 L-ascorbate + NAD(+). Catalyzes the conversion of monodehydroascorbate to ascorbate, oxidizing NADH in the process. The chain is Monodehydroascorbate reductase from Pisum sativum (Garden pea).